The primary structure comprises 90 residues: Large ribosomal subunit protein bL27 (90 aa).

The segment at 1-21 (MASKKAGGSTRNGRDSEAKRL) is disordered.

The protein belongs to the bacterial ribosomal protein bL27 family.

The polypeptide is Large ribosomal subunit protein bL27 (Neisseria gonorrhoeae (strain ATCC 700825 / FA 1090)).